Here is a 57-residue protein sequence, read N- to C-terminus: uncharacterized protein (57 aa).

This is an uncharacterized protein from Bacillus subtilis (strain 168).